A 198-amino-acid polypeptide reads, in one-letter code: Acireductone dioxygenase (198 aa).

His97, His99, Glu103, and His141 together coordinate Fe(2+). His97, His99, Glu103, and His141 together coordinate Ni(2+).

It belongs to the acireductone dioxygenase (ARD) family. Monomer. Fe(2+) is required as a cofactor. Requires Ni(2+) as cofactor.

It catalyses the reaction 1,2-dihydroxy-5-(methylsulfanyl)pent-1-en-3-one + O2 = 3-(methylsulfanyl)propanoate + CO + formate + 2 H(+). The enzyme catalyses 1,2-dihydroxy-5-(methylsulfanyl)pent-1-en-3-one + O2 = 4-methylsulfanyl-2-oxobutanoate + formate + 2 H(+). Its pathway is amino-acid biosynthesis; L-methionine biosynthesis via salvage pathway; L-methionine from S-methyl-5-thio-alpha-D-ribose 1-phosphate: step 5/6. Its function is as follows. Catalyzes 2 different reactions between oxygen and the acireductone 1,2-dihydroxy-3-keto-5-methylthiopentene (DHK-MTPene) depending upon the metal bound in the active site. Fe-containing acireductone dioxygenase (Fe-ARD) produces formate and 2-keto-4-methylthiobutyrate (KMTB), the alpha-ketoacid precursor of methionine in the methionine recycle pathway. Ni-containing acireductone dioxygenase (Ni-ARD) produces methylthiopropionate, carbon monoxide and formate, and does not lie on the methionine recycle pathway. This Synechococcus elongatus (strain ATCC 33912 / PCC 7942 / FACHB-805) (Anacystis nidulans R2) protein is Acireductone dioxygenase.